Reading from the N-terminus, the 278-residue chain is Gap junction delta-3 protein (278 aa).

Topologically, residues 1–24 (MGEWAFLGSLLDAVQLQSPLVGRL) are cytoplasmic. Residues 25-45 (WLVIMLIFRILVLATVGGAVF) form a helical membrane-spanning segment. Residues 46–76 (EDEQEEFVCNTLQPGCRQTCYDRAFPVSHYR) are Extracellular-facing. Residues 77-97 (FWLFHILLLSAPPVLFVIYSM) form a helical membrane-spanning segment. Residues 98–136 (HQASKEAGGAQLAPPCARGRAEAPCSPCALRARRARRCY) lie on the Cytoplasmic side of the membrane. Residues 137 to 157 (LLSVALRLLAELAFLGGQALL) form a helical membrane-spanning segment. The Extracellular segment spans residues 158–188 (YGFRVDPHYACAGPPCPHTVDCFVSRPTEKT). The chain crosses the membrane as a helical span at residues 189-209 (VFVVFYFAVGLLSALLSVAEL). Over 210-278 (GHLLWKGRQR…LATVRQDLAI (69 aa)) the chain is Cytoplasmic. A disordered region spans residues 223–278 (LPPPPPSPSLPSQRGDPDPFGPPAYAHRSPAGDSEGEGGSGHSKASLATVRQDLAI).

This sequence belongs to the connexin family. Delta-type subfamily. In terms of assembly, a connexon is composed of a hexamer of connexins.

It localises to the cell membrane. Its subcellular location is the cell junction. The protein resides in the gap junction. In terms of biological role, one gap junction consists of a cluster of closely packed pairs of transmembrane channels, the connexons, through which materials of low MW diffuse from one cell to a neighboring cell. The chain is Gap junction delta-3 protein (Gjd3) from Mus musculus (Mouse).